We begin with the raw amino-acid sequence, 411 residues long: Epoxyqueuosine reductase (411 aa).

Aspartate 171 (proton donor) is an active-site residue. The 33-residue stretch at 213–245 (LPLPVDKPQEEQCGRCVACMTTCPTGAIVAPYT) folds into the 4Fe-4S ferredoxin-type domain. [4Fe-4S] cluster is bound by residues cysteine 225, cysteine 228, cysteine 231, cysteine 235, cysteine 251, cysteine 278, cysteine 281, and cysteine 285.

The protein belongs to the QueG family. As to quaternary structure, monomer. Cob(II)alamin is required as a cofactor. It depends on [4Fe-4S] cluster as a cofactor.

The protein localises to the cytoplasm. It catalyses the reaction epoxyqueuosine(34) in tRNA + AH2 = queuosine(34) in tRNA + A + H2O. The protein operates within tRNA modification; tRNA-queuosine biosynthesis. Catalyzes the conversion of epoxyqueuosine (oQ) to queuosine (Q), which is a hypermodified base found in the wobble positions of tRNA(Asp), tRNA(Asn), tRNA(His) and tRNA(Tyr). In Yersinia pestis, this protein is Epoxyqueuosine reductase.